Reading from the N-terminus, the 420-residue chain is MSNTQKQLALAKAAKKSVNTADTEEKNRALLAMADSLEAAAADILAANRQDLEAAAGNIPESMTDRLLLDGKRICAMADGIRAVAALPDPVGEILETSTLPNGLEIVKKRVAMGVIGIIYESRPNVTSDAAALALKSGSAVVLRSGKDAFQSARAIVAALKAGLAQTRIDPDALQLIEDTGREGSYEMMRAKDYLDLLIPRGGAGLIRAVVENAVVPVIETGTGIVHIYIDKDADWDKALRIVYNAKTSRPSVCNSMEVLLVHEDIAADFLPKLERLLVRDRIEAGLPPVRFRLDPQAARHIGGEAAGADDFDTEFLDYILAVKTVASVEEAVWHIETHSTHHSDGIVTENRHAADYFTTHIDSAAVYVNASTRFTDGGEFGLGCEMGISTQKLHARGPMGLKELTSYKYIVQGTGQVRE.

This sequence belongs to the gamma-glutamyl phosphate reductase family.

The protein resides in the cytoplasm. The enzyme catalyses L-glutamate 5-semialdehyde + phosphate + NADP(+) = L-glutamyl 5-phosphate + NADPH + H(+). Its pathway is amino-acid biosynthesis; L-proline biosynthesis; L-glutamate 5-semialdehyde from L-glutamate: step 2/2. In terms of biological role, catalyzes the NADPH-dependent reduction of L-glutamate 5-phosphate into L-glutamate 5-semialdehyde and phosphate. The product spontaneously undergoes cyclization to form 1-pyrroline-5-carboxylate. The protein is Gamma-glutamyl phosphate reductase of Neisseria meningitidis serogroup C (strain 053442).